The sequence spans 146 residues: UPF0260 protein Sbal_1871 (146 aa).

The protein belongs to the UPF0260 family.

The sequence is that of UPF0260 protein Sbal_1871 from Shewanella baltica (strain OS155 / ATCC BAA-1091).